Here is a 1373-residue protein sequence, read N- to C-terminus: Disease resistance protein RRS1 (1373 aa).

The 142-residue stretch at 5–146 (EKDEEFVCIS…EIVRDVYETH (142 aa)) folds into the TIR domain. The NB-ARC domain occupies 170-421 (IGIRCVGIWG…LLEGCGFFPH (252 aa)). 179–186 (GMPGIGKT) contacts ATP. 9 LRR repeats span residues 498-522 (SEEI…AFKN), 535-553 (NPEV…HSLP), 554-575 (NELR…NFDP), 577-598 (HLVE…TKNL), 621-646 (AENL…RLLR), 665-688 (PPNI…TVKP), 742-766 (LPNM…SIQG), 768-793 (PRFL…SLEI), and 831-854 (PRNL…PLSL). A Nuclear localization signal motif is present at residues 988-1005 (RNFHCWAPGKVVPKVRKD). Positions 1204 to 1272 (IPAIDEGDLW…YLSEHNHPRP (69 aa)) form a DNA-binding region, WRKY. The interval 1300-1323 (RVFQNKDEPNKPHLPSSSTPPGNA) is disordered.

Interacts with PopP2, a R.solanacearum type III effector.

The protein resides in the nucleus. In terms of biological role, transcription factor. Interacts specifically with the W box (5'-(T)TGAC[CT]-3'), a frequently occurring elicitor-responsive cis-acting element. Also acts as a disease resistance protein involved in resistance to fungal and bacterial pathogens, including R.solanacearum, P.syringae pv. tomato and C.higginsianum. In presence of RPS4, elicites an EDS1-dependent hypersensitive response. The protein is Disease resistance protein RRS1 of Arabidopsis thaliana (Mouse-ear cress).